A 280-amino-acid chain; its full sequence is Bis(5'-nucleosyl)-tetraphosphatase, symmetrical (280 aa).

Belongs to the Ap4A hydrolase family.

It catalyses the reaction P(1),P(4)-bis(5'-adenosyl) tetraphosphate + H2O = 2 ADP + 2 H(+). Hydrolyzes diadenosine 5',5'''-P1,P4-tetraphosphate to yield ADP. The chain is Bis(5'-nucleosyl)-tetraphosphatase, symmetrical from Shigella flexneri serotype 5b (strain 8401).